Consider the following 4518-residue polypeptide: Dynein axonemal heavy chain 11 (4518 aa).

The tract at residues 1-1857 is stem; sequence MAASVAAQEA…LVHICDAQFQ (1857 aa). 4 AAA regions span residues 1858 to 2079, 2139 to 2368, 2474 to 2721, and 2819 to 3068; these read YFYE…VLVV, QMVR…TSFK, TMDP…VFQG, and NYND…EGRH. ATP-binding positions include 1896 to 1903, 2177 to 2184, 2512 to 2519, and 2857 to 2864; these read GPAGTGKT, GNAGTGKS, GNAGVGKT, and GVGGSGKQ. Residues 3074–3405 are stalk; the sequence is KSFLEQISLF…GQSIKSFEAQ (332 aa). A coiled-coil region spans residues 3322 to 3391; that stretch reads LAQANLELAT…NRLVKELEVK (70 aa). 2 AAA regions span residues 3461-3688 and 3898-4124; these read LTDD…EIER and LRNF…VLYN.

Belongs to the dynein heavy chain family. In terms of assembly, consists of at least two heavy chains and a number of intermediate and light chains. Interacts with CFAP45.

The protein resides in the cytoplasm. Its subcellular location is the cytoskeleton. It is found in the cilium axoneme. In terms of biological role, force generating protein of respiratory cilia. Produces force towards the minus ends of microtubules. Dynein has ATPase activity; the force-producing power stroke is thought to occur on release of ADP. This chain is Dynein axonemal heavy chain 11 (DNAH11), found in Sus scrofa (Pig).